Consider the following 336-residue polypeptide: Probable G-protein coupled receptor 160 (336 aa).

Residues 1 to 20 (MTALSSKNCSLQYQLHQSPQ) are Extracellular-facing. An N-linked (GlcNAc...) asparagine glycan is attached at Asn8. A helical membrane pass occupies residues 21-41 (LLEASCLLFLIILGKVLLNIL). The Cytoplasmic portion of the chain corresponds to 42–56 (LLRVRRGDARWTLME). The helical transmembrane segment at 57-77 (YFCFSLALVDLLLLVNISILT) threads the bilayer. Topologically, residues 78-95 (YFRDFVVLGIRFTRYHIC) are extracellular. Residues 96–116 (LLTQIISFTYGFLHYPVCSLA) traverse the membrane as a helical segment. Residues 117–136 (CIDYWCNLSRASKQSSRWQK) are Cytoplasmic-facing. Residues 137 to 157 (LLYFLTVILTWISVLAYVLVD) traverse the membrane as a helical segment. Over 158–186 (PAISVSLKAHRGYVYQCPAYVSTQSHWLS) the chain is Extracellular. A helical transmembrane segment spans residues 187–207 (LSMLMVLFVAFLISWQEVVAL). Topologically, residues 208–243 (LQAMRIASYKSKAALYFPFPLHCGYALSCREALLPR) are cytoplasmic. A helical membrane pass occupies residues 244-264 (LIVCFLGTWFPFVALQVLILS). Topologically, residues 265–272 (LRVQIPAY) are extracellular. The chain crosses the membrane as a helical span at residues 273-293 (IEMNVPWLYFVNSFLIAAVYW). The Cytoplasmic portion of the chain corresponds to 294–336 (FNCHKLDLRDSSLPVDPFINWKCCFVPVHRLKQVERPMSIVIC).

It belongs to the G-protein coupled receptor 1 family.

The protein localises to the cell membrane. Orphan receptor. This chain is Probable G-protein coupled receptor 160 (Gpr160), found in Mus musculus (Mouse).